We begin with the raw amino-acid sequence, 232 residues long: Recombination protein RecR (232 aa).

The C4-type zinc finger occupies 92-107 (CQVCFHLSAEPVCDIC). In terms of domain architecture, Toprim spans 115-209 (SVICVVSDPR…KVTRIAFGLP (95 aa)).

It belongs to the RecR family.

Functionally, may play a role in DNA repair. It seems to be involved in an RecBC-independent recombinational process of DNA repair. It may act with RecF and RecO. This chain is Recombination protein RecR, found in Synechocystis sp. (strain ATCC 27184 / PCC 6803 / Kazusa).